We begin with the raw amino-acid sequence, 250 residues long: 2-(R)-hydroxypropyl-CoM dehydrogenase (250 aa).

NAD(+)-binding positions include 12 to 14 (SGN), Asp33, 60 to 61 (DV), and Asn87. Arg152 provides a ligand contact to 2-oxopropyl-coenzyme M. The active-site Proton acceptor is the Tyr155. 188–192 (IETPM) is an NAD(+) binding site. 195–196 (WR) provides a ligand contact to 2-oxopropyl-coenzyme M.

The protein belongs to the short-chain dehydrogenases/reductases (SDR) family. Homodimer in solution. Homotetramer. Component III of the aliphatic epoxide carboxylation complex together with components I, II and IV.

The enzyme catalyses (R)-2-hydroxypropyl-coenzyme M + NAD(+) = 2-oxopropyl-coenzyme M + NADH + H(+). It participates in alkene metabolism; propylene degradation. Its activity is regulated as follows. Inhibited by the arginine-specific modifiers 2,3-butanedione and phenylglyoxal. 2-(2-methyl-2-hydroxypropylthio)ethanesulfonate (M-HPC), an achiral analog of both R-HPC and S-HPC, and (2S)-2-hydroxypropyl-coenzyme M (S-HPC) are competitive inhibitors. Inhibited (at 70%) by the coenzyme M analog 2-bromoethanesulfonate (BES). In terms of biological role, involved in aliphatic epoxide carboxylation. Catalyzes the reversible oxidation of (R)-2-hydroxypropyl-coenzyme M (R-HPC) to 2-oxopropyl-coenzyme M (2-KPC). The enzyme is highly specific for the R enantiomers. In vitro can also use achiral 2-propanol and short-chain (R)- and (S)-2-alkanols. This Xanthobacter autotrophicus (strain ATCC BAA-1158 / Py2) protein is 2-(R)-hydroxypropyl-CoM dehydrogenase.